Here is a 33-residue protein sequence, read N- to C-terminus: MEALVYTFLLVSTLGIIFFAIFFREPPKISTKK.

A helical membrane pass occupies residues 3 to 23; that stretch reads ALVYTFLLVSTLGIIFFAIFF.

Belongs to the PsbT family. PSII is composed of 1 copy each of membrane proteins PsbA, PsbB, PsbC, PsbD, PsbE, PsbF, PsbH, PsbI, PsbJ, PsbK, PsbL, PsbM, PsbT, PsbY, PsbZ, Psb30/Ycf12, at least 3 peripheral proteins of the oxygen-evolving complex and a large number of cofactors. It forms dimeric complexes.

The protein localises to the plastid. The protein resides in the chloroplast thylakoid membrane. Its function is as follows. Found at the monomer-monomer interface of the photosystem II (PS II) dimer, plays a role in assembly and dimerization of PSII. PSII is a light-driven water plastoquinone oxidoreductase, using light energy to abstract electrons from H(2)O, generating a proton gradient subsequently used for ATP formation. The sequence is that of Photosystem II reaction center protein T from Arabidopsis thaliana (Mouse-ear cress).